A 122-amino-acid chain; its full sequence is Large ribosomal subunit protein uL18 (122 aa).

It belongs to the universal ribosomal protein uL18 family. As to quaternary structure, part of the 50S ribosomal subunit; part of the 5S rRNA/L5/L18/L25 subcomplex. Contacts the 5S and 23S rRNAs.

In terms of biological role, this is one of the proteins that bind and probably mediate the attachment of the 5S RNA into the large ribosomal subunit, where it forms part of the central protuberance. The protein is Large ribosomal subunit protein uL18 of Petrotoga mobilis (strain DSM 10674 / SJ95).